Reading from the N-terminus, the 84-residue chain is Replication regulatory protein repA2 (84 aa).

The span at 1–13 (MSQTENAVTSSSG) shows a compositional bias: polar residues. The segment at 1–31 (MSQTENAVTSSSGAKRAYRKGNPLSDAEKQR) is disordered.

In terms of biological role, this protein is involved in the determination of copy number in gene replication. It binds to the repA promoter thus inhibiting the synthesis of the mRNA for the initiator protein RepA. The chain is Replication regulatory protein repA2 (repA2) from Escherichia coli.